Consider the following 116-residue polypeptide: U11-theraphotoxin-Hhn1b (116 aa).

The signal sequence occupies residues 1 to 21; the sequence is MNTVRVTFLLVFVLAVSLGQA. Positions 22–74 are excised as a propeptide; sequence DKDENRMEMQEKTEQGKSYLDFAENLLLQKLEELEAKLLEEDSEESRNSRQKR. The span at 60–69 shows a compositional bias: basic and acidic residues; it reads LEEDSEESRN. A disordered region spans residues 60 to 83; the sequence is LEEDSEESRNSRQKRCIGEGVPCD. 3 disulfide bridges follow: C75–C90, C82–C95, and C89–C110.

This sequence belongs to the neurotoxin 14 (magi-1) family. 01 (HNTX-16) subfamily. Expressed by the venom gland.

Its subcellular location is the secreted. In terms of biological role, probable ion channel inhibitor. The protein is U11-theraphotoxin-Hhn1b of Cyriopagopus hainanus (Chinese bird spider).